We begin with the raw amino-acid sequence, 196 residues long: FMN-dependent NADH:quinone oxidoreductase (196 aa).

Ser10 lines the FMN pocket.

It belongs to the azoreductase type 1 family. In terms of assembly, homodimer. FMN serves as cofactor.

It catalyses the reaction 2 a quinone + NADH + H(+) = 2 a 1,4-benzosemiquinone + NAD(+). The catalysed reaction is N,N-dimethyl-1,4-phenylenediamine + anthranilate + 2 NAD(+) = 2-(4-dimethylaminophenyl)diazenylbenzoate + 2 NADH + 2 H(+). In terms of biological role, quinone reductase that provides resistance to thiol-specific stress caused by electrophilic quinones. Also exhibits azoreductase activity. Catalyzes the reductive cleavage of the azo bond in aromatic azo compounds to the corresponding amines. The polypeptide is FMN-dependent NADH:quinone oxidoreductase (Cereibacter sphaeroides (strain ATCC 17029 / ATH 2.4.9) (Rhodobacter sphaeroides)).